The following is a 209-amino-acid chain: CASP-like protein 2A2 (209 aa).

Residues 1 to 37 (MSKTAGVGRLGGARAADAAQQQQLAAGDAAVARAARP) are Cytoplasmic-facing. Residues 38-58 (IETLLRAAPLVLCVAAMTLML) form a helical membrane-spanning segment. Residues 59-79 (RDQQSNEYGTVAYSDLGGFKY) lie on the Extracellular side of the membrane. A helical transmembrane segment spans residues 80–100 (LVYANGLCAAYSLASAFYTAV). Topologically, residues 101 to 109 (PRPATVSRS) are cytoplasmic. A helical transmembrane segment spans residues 110-130 (WVVFLLDQVFTYLILAAGAAA). Residues 131 to 161 (AELLYLAYNGDKEVTWSEACGVFGSFCRQAR) are Extracellular-facing. Residues 162-182 (ISVAITFGAVLCFILLSLLSS) form a helical membrane-spanning segment. Residues 183–209 (YRLFSAYEAPPPSALGSKGVEIAAYPR) lie on the Cytoplasmic side of the membrane.

This sequence belongs to the Casparian strip membrane proteins (CASP) family. Homodimer and heterodimers.

It localises to the cell membrane. The chain is CASP-like protein 2A2 from Zea mays (Maize).